A 131-amino-acid chain; its full sequence is D-ribose pyranase (131 aa).

Histidine 20 functions as the Proton donor in the catalytic mechanism. Substrate-binding positions include aspartate 28, histidine 98, and tyrosine 120 to asparagine 122.

Belongs to the RbsD / FucU family. RbsD subfamily. In terms of assembly, homodecamer.

The protein localises to the cytoplasm. The catalysed reaction is beta-D-ribopyranose = beta-D-ribofuranose. It participates in carbohydrate metabolism; D-ribose degradation; D-ribose 5-phosphate from beta-D-ribopyranose: step 1/2. Its function is as follows. Catalyzes the interconversion of beta-pyran and beta-furan forms of D-ribose. The protein is D-ribose pyranase of Limosilactobacillus fermentum (strain NBRC 3956 / LMG 18251) (Lactobacillus fermentum).